The primary structure comprises 366 residues: Dual-specificity RNA methyltransferase RlmN (366 aa).

Catalysis depends on Glu91, which acts as the Proton acceptor. Positions Glu97–Asp333 constitute a Radical SAM core domain. Cysteines 104 and 338 form a disulfide. Positions 111, 115, and 118 each coordinate [4Fe-4S] cluster. S-adenosyl-L-methionine is bound by residues Gly164–Glu165, Ser196, Ser218–His220, and Asn295. Cys338 acts as the S-methylcysteine intermediate in catalysis.

It belongs to the radical SAM superfamily. RlmN family. The cofactor is [4Fe-4S] cluster.

It is found in the cytoplasm. The catalysed reaction is adenosine(2503) in 23S rRNA + 2 reduced [2Fe-2S]-[ferredoxin] + 2 S-adenosyl-L-methionine = 2-methyladenosine(2503) in 23S rRNA + 5'-deoxyadenosine + L-methionine + 2 oxidized [2Fe-2S]-[ferredoxin] + S-adenosyl-L-homocysteine. It carries out the reaction adenosine(37) in tRNA + 2 reduced [2Fe-2S]-[ferredoxin] + 2 S-adenosyl-L-methionine = 2-methyladenosine(37) in tRNA + 5'-deoxyadenosine + L-methionine + 2 oxidized [2Fe-2S]-[ferredoxin] + S-adenosyl-L-homocysteine. Its function is as follows. Specifically methylates position 2 of adenine 2503 in 23S rRNA and position 2 of adenine 37 in tRNAs. m2A2503 modification seems to play a crucial role in the proofreading step occurring at the peptidyl transferase center and thus would serve to optimize ribosomal fidelity. This Laribacter hongkongensis (strain HLHK9) protein is Dual-specificity RNA methyltransferase RlmN.